Consider the following 463-residue polypeptide: uncharacterized protein (463 aa).

A run of 12 helical transmembrane segments spans residues 21 to 40 (DFACNLIYATVSTYLLFFYT), 50 to 72 (AGTMFLVVRIIDALADPFIGTIV), 84 to 104 (PYLLFGAFPFVILAILCFTTP), 112 to 132 (LIYAYITYVGLSLTYTTINVP), 156 to 176 (LFANLGGLVVAFFVPLLAAYL), 186 to 206 (GWQLTMGILGMIGGCLLIFCF), 237 to 257 (LVVLSIFFIIIFGVNSISNSV), 271 to 291 (LVKWYGLIGSLPALVILPFIP), 311 to 331 (IIGLLALLFVPPSNVYLILVC), 334 to 354 (IAAAGSLTAGGYMWALIPETI), 367 to 387 (GLIYAIIGFFFKFGMALGGVV), and 408 to 428 (LMGILITTTIIPVFLLVLALI).

The protein belongs to the sodium:galactoside symporter (TC 2.A.2) family.

Its subcellular location is the cell membrane. This is an uncharacterized protein from Bacillus subtilis (strain 168).